The following is a 321-amino-acid chain: Quinol oxidase subunit 2 (321 aa).

The N-terminal stretch at 1-25 (MIFLFRALKPLLVLALLTVVFVLGG) is a signal peptide. Cys-26 is lipidated: N-palmitoyl cysteine. Cys-26 carries the S-diacylglycerol cysteine lipid modification. A run of 2 helical transmembrane segments spans residues 49-69 (SIGF…IILV) and 90-110 (TFLE…LSVP). Residues 294 to 321 (QAVSPHSKTDPFENVKKNEFKKSDDTEE) are disordered. A compositionally biased stretch (basic and acidic residues) spans 300 to 321 (SKTDPFENVKKNEFKKSDDTEE).

This sequence belongs to the cytochrome c oxidase subunit 2 family. Interacts with FloT.

It localises to the cell membrane. The protein resides in the membrane raft. The enzyme catalyses 2 a quinol + O2 = 2 a quinone + 2 H2O. Its function is as follows. Catalyzes quinol oxidation with the concomitant reduction of oxygen to water. Major component for energy conversion during vegetative growth. Subunit II transfers the electrons from a quinol to the binuclear center of the catalytic subunit I. The polypeptide is Quinol oxidase subunit 2 (qoxA) (Bacillus subtilis (strain 168)).